The primary structure comprises 708 residues: tRNA 5-methylaminomethyl-2-thiouridine biosynthesis bifunctional protein MnmC (708 aa).

The interval 1 to 278 (MTAEPNKPCQ…ERQVLRQQDA (278 aa)) is tRNA (mnm(5)s(2)U34)-methyltransferase. Positions 301–708 (IGGGLASAHL…LRKLLKGKAL (408 aa)) are FAD-dependent cmnm(5)s(2)U34 oxidoreductase.

It in the N-terminal section; belongs to the methyltransferase superfamily. tRNA (mnm(5)s(2)U34)-methyltransferase family. This sequence in the C-terminal section; belongs to the DAO family. The cofactor is FAD.

The protein localises to the cytoplasm. It carries out the reaction 5-aminomethyl-2-thiouridine(34) in tRNA + S-adenosyl-L-methionine = 5-methylaminomethyl-2-thiouridine(34) in tRNA + S-adenosyl-L-homocysteine + H(+). Functionally, catalyzes the last two steps in the biosynthesis of 5-methylaminomethyl-2-thiouridine (mnm(5)s(2)U) at the wobble position (U34) in tRNA. Catalyzes the FAD-dependent demodification of cmnm(5)s(2)U34 to nm(5)s(2)U34, followed by the transfer of a methyl group from S-adenosyl-L-methionine to nm(5)s(2)U34, to form mnm(5)s(2)U34. This chain is tRNA 5-methylaminomethyl-2-thiouridine biosynthesis bifunctional protein MnmC, found in Shewanella baltica (strain OS195).